Consider the following 142-residue polypeptide: Small ribosomal subunit protein uS12 (142 aa).

Residues 1–44 (MANGKYAARKLKQDRQQRRWSDSEYARRERGLGAKSDPLEGAPQ) are disordered. Positions 11–32 (LKQDRQQRRWSDSEYARRERGL) are enriched in basic and acidic residues.

It belongs to the universal ribosomal protein uS12 family. In terms of assembly, part of the 30S ribosomal subunit.

Functionally, with S4 and S5 plays an important role in translational accuracy. Located at the interface of the 30S and 50S subunits. In Haloquadratum walsbyi (strain DSM 16790 / HBSQ001), this protein is Small ribosomal subunit protein uS12.